A 360-amino-acid chain; its full sequence is Endolytic peptidoglycan transglycosylase RlpA (360 aa).

Residues 1–17 (MRKEWLWVGIASVLLSA) form the signal peptide. The N-palmitoyl cysteine moiety is linked to residue Cys18. Cys18 carries S-diacylglycerol cysteine lipidation. The SPOR domain maps to 283–359 (SAISGGYVVQ…AQQQSFIVAA (77 aa)).

The protein belongs to the RlpA family.

It is found in the cell membrane. Lytic transglycosylase with a strong preference for naked glycan strands that lack stem peptides. This chain is Endolytic peptidoglycan transglycosylase RlpA, found in Yersinia pestis.